Here is a 356-residue protein sequence, read N- to C-terminus: Syntaxin-7A (356 aa).

Over 1–333 (MYNNNNNFGG…NQKSSRNKMC (333 aa)) the chain is Cytoplasmic. Composition is skewed to low complexity over residues 32 to 74 (NNNN…FDNN) and 207 to 224 (NNNS…NNQQ). Disordered regions lie at residues 32–88 (NNNN…NSDY) and 187–247 (EKTT…RRQQ). The segment covering 233 to 244 (EDEHQSLMESSR) has biased composition (basic and acidic residues). The region spanning 259–321 (NSIIQERDEG…KEGVNHLREA (63 aa)) is the t-SNARE coiled-coil homology domain. Residues 334–354 (WIVLILLIVCAVLGVILFFTL) form a helical; Anchor for type IV membrane protein membrane-spanning segment. Residues 355 to 356 (RK) lie on the Vesicular side of the membrane.

This sequence belongs to the syntaxin family. Component of the SNARE complex composed of syn7A, syn8A, vamp7A and vti1A. Interacts with nsfA, snpA and snpC.

It localises to the endosome membrane. Involved in the targeting and/or fusion of transport vesicles to their target membrane during transport of proteins from the early endosome to the lysosome. Required for fusion of late endosomes with lysosomes and homotypic lysosomal fusion. May be involved in protein trafficking from the plasma membrane to the early endosome (EE) as well as in homotypic fusion of endocytic organelles. The chain is Syntaxin-7A from Dictyostelium discoideum (Social amoeba).